Here is a 198-residue protein sequence, read N- to C-terminus: Large ribosomal subunit protein eL19 (198 aa).

Disordered stretches follow at residues 66 to 85 (YEEA…RGTA) and 150 to 177 (KRAK…EERQ). Basic residues predominate over residues 71–83 (RKGRHTGYGKRRG). Positions 160–177 (QARRDKNKESRKRREERQ) are enriched in basic and acidic residues.

Belongs to the eukaryotic ribosomal protein eL19 family.

This is Large ribosomal subunit protein eL19 (rpl-19) from Caenorhabditis elegans.